Consider the following 313-residue polypeptide: Pyrimidine-specific ribonucleoside hydrolase RihB (313 aa).

Catalysis depends on Asp11, which acts as the Proton acceptor. Residues Asp11, Asp16, and Val124 each coordinate Ca(2+). Residues Gln227 and His239 each contribute to the substrate site. Asp240 is a Ca(2+) binding site.

It belongs to the IUNH family. RihB subfamily. As to quaternary structure, homotetramer. It depends on Ca(2+) as a cofactor.

The catalysed reaction is a pyrimidine ribonucleoside + H2O = a pyrimidine nucleobase + D-ribose. Hydrolyzes cytidine or uridine to ribose and cytosine or uracil, respectively. Has a clear preference for cytidine over uridine. Strictly specific for ribonucleosides. This chain is Pyrimidine-specific ribonucleoside hydrolase RihB, found in Escherichia coli O157:H7.